The sequence spans 269 residues: Regulatory protein RecX (269 aa).

The protein belongs to the RecX family.

It is found in the cytoplasm. In terms of biological role, modulates RecA activity. The chain is Regulatory protein RecX from Lactococcus lactis subsp. cremoris (strain MG1363).